Consider the following 329-residue polypeptide: Ribosomal RNA small subunit methyltransferase C (329 aa).

Belongs to the methyltransferase superfamily. RsmC family. In terms of assembly, monomer.

The protein resides in the cytoplasm. The catalysed reaction is guanosine(1207) in 16S rRNA + S-adenosyl-L-methionine = N(2)-methylguanosine(1207) in 16S rRNA + S-adenosyl-L-homocysteine + H(+). Specifically methylates the guanine in position 1207 of 16S rRNA in the 30S particle. In Actinobacillus pleuropneumoniae serotype 5b (strain L20), this protein is Ribosomal RNA small subunit methyltransferase C.